A 231-amino-acid chain; its full sequence is uncharacterized protein (231 aa).

An SWIM-type zinc finger spans residues 43–76; the sequence is YKVKVDLDNNYFGLCTCQYKYNCKHAYALIEAYE.

This is an uncharacterized protein from Methanocaldococcus jannaschii (strain ATCC 43067 / DSM 2661 / JAL-1 / JCM 10045 / NBRC 100440) (Methanococcus jannaschii).